The primary structure comprises 302 residues: Acetaldehyde dehydrogenase 1 (302 aa).

12–15 (SGNI) lines the NAD(+) pocket. The active-site Acyl-thioester intermediate is the Cys127. NAD(+)-binding positions include 158–166 (SAGPGTRAN) and Asn277.

The protein belongs to the acetaldehyde dehydrogenase family.

The catalysed reaction is acetaldehyde + NAD(+) + CoA = acetyl-CoA + NADH + H(+). This chain is Acetaldehyde dehydrogenase 1, found in Mycobacteroides abscessus (strain ATCC 19977 / DSM 44196 / CCUG 20993 / CIP 104536 / JCM 13569 / NCTC 13031 / TMC 1543 / L948) (Mycobacterium abscessus).